A 205-amino-acid chain; its full sequence is Large ribosomal subunit protein uL4 (205 aa).

The disordered stretch occupies residues 45–97; sequence RQGTSAVKNRSAVRGGGKKPWRQKGTGRARQGSIRAPQWRGGGTVFGPTPRSY. A compositionally biased stretch (basic residues) spans 60-71; it reads GGKKPWRQKGTG.

The protein belongs to the universal ribosomal protein uL4 family. In terms of assembly, part of the 50S ribosomal subunit.

One of the primary rRNA binding proteins, this protein initially binds near the 5'-end of the 23S rRNA. It is important during the early stages of 50S assembly. It makes multiple contacts with different domains of the 23S rRNA in the assembled 50S subunit and ribosome. Its function is as follows. Forms part of the polypeptide exit tunnel. The chain is Large ribosomal subunit protein uL4 from Lactobacillus gasseri (strain ATCC 33323 / DSM 20243 / BCRC 14619 / CIP 102991 / JCM 1131 / KCTC 3163 / NCIMB 11718 / NCTC 13722 / AM63).